The chain runs to 122 residues: Large ribosomal subunit protein uL14 (122 aa).

It belongs to the universal ribosomal protein uL14 family. As to quaternary structure, part of the 50S ribosomal subunit. Forms a cluster with proteins L3 and L19. In the 70S ribosome, L14 and L19 interact and together make contacts with the 16S rRNA in bridges B5 and B8.

Functionally, binds to 23S rRNA. Forms part of two intersubunit bridges in the 70S ribosome. The chain is Large ribosomal subunit protein uL14 from Trichormus variabilis (strain ATCC 29413 / PCC 7937) (Anabaena variabilis).